Reading from the N-terminus, the 339-residue chain is 1-aminocyclopropane-1-carboxylate deaminase (339 aa).

Lysine 52 carries the post-translational modification N6-(pyridoxal phosphate)lysine. Serine 79 (nucleophile) is an active-site residue.

It belongs to the ACC deaminase/D-cysteine desulfhydrase family. As to quaternary structure, homotrimer. Pyridoxal 5'-phosphate is required as a cofactor.

It carries out the reaction 1-aminocyclopropane-1-carboxylate + H2O = 2-oxobutanoate + NH4(+). Functionally, catalyzes a cyclopropane ring-opening reaction, the irreversible conversion of 1-aminocyclopropane-1-carboxylate (ACC) to ammonia and alpha-ketobutyrate. Allows growth on ACC as a nitrogen source. In Bradyrhizobium sp. (strain ORS 278), this protein is 1-aminocyclopropane-1-carboxylate deaminase.